Here is a 399-residue protein sequence, read N- to C-terminus: Probable 2,3-bisphosphoglycerate-independent phosphoglycerate mutase (399 aa).

The protein belongs to the BPG-independent phosphoglycerate mutase family. A-PGAM subfamily.

The catalysed reaction is (2R)-2-phosphoglycerate = (2R)-3-phosphoglycerate. It functions in the pathway carbohydrate degradation; glycolysis; pyruvate from D-glyceraldehyde 3-phosphate: step 3/5. Catalyzes the interconversion of 2-phosphoglycerate and 3-phosphoglycerate. The polypeptide is Probable 2,3-bisphosphoglycerate-independent phosphoglycerate mutase (Geobacter sulfurreducens (strain ATCC 51573 / DSM 12127 / PCA)).